The primary structure comprises 458 residues: Transmembrane protein 135 (458 aa).

6 helical membrane-spanning segments follow: residues 68–88 (ILQS…FFCI), 96–116 (FYSW…AILI), 149–169 (TLRN…MFFF), 298–318 (FQLG…SCFL), 331–351 (IVAG…TISM), and 377–397 (ADTI…VMEV).

Belongs to the TMEM135 family.

It is found in the mitochondrion membrane. It localises to the peroxisome membrane. In terms of biological role, involved in mitochondrial metabolism by regulating the balance between mitochondrial fusion and fission. May act as a regulator of mitochondrial fission that promotes DNM1L-dependent fission through activation of DNM1L. May be involved in peroxisome organization. The chain is Transmembrane protein 135 from Mus musculus (Mouse).